A 392-amino-acid polypeptide reads, in one-letter code: Formate-dependent phosphoribosylglycinamide formyltransferase (392 aa).

Residues 22–23 and Glu82 contribute to the N(1)-(5-phospho-beta-D-ribosyl)glycinamide site; that span reads EL. ATP is bound by residues Arg114, Lys155, 160–165, 195–198, and Glu203; these read SSGKGQ and EGVV. Residues 119–308 enclose the ATP-grasp domain; it reads RLAAEELQLP…EFALHVRAFL (190 aa). Mg(2+) is bound by residues Glu267 and Glu279. Residues Asp286, Lys355, and 362–363 each bind N(1)-(5-phospho-beta-D-ribosyl)glycinamide; that span reads RR.

It belongs to the PurK/PurT family. Homodimer.

It catalyses the reaction N(1)-(5-phospho-beta-D-ribosyl)glycinamide + formate + ATP = N(2)-formyl-N(1)-(5-phospho-beta-D-ribosyl)glycinamide + ADP + phosphate + H(+). It functions in the pathway purine metabolism; IMP biosynthesis via de novo pathway; N(2)-formyl-N(1)-(5-phospho-D-ribosyl)glycinamide from N(1)-(5-phospho-D-ribosyl)glycinamide (formate route): step 1/1. Its function is as follows. Involved in the de novo purine biosynthesis. Catalyzes the transfer of formate to 5-phospho-ribosyl-glycinamide (GAR), producing 5-phospho-ribosyl-N-formylglycinamide (FGAR). Formate is provided by PurU via hydrolysis of 10-formyl-tetrahydrofolate. This is Formate-dependent phosphoribosylglycinamide formyltransferase from Shigella boydii serotype 4 (strain Sb227).